The following is a 531-amino-acid chain: Acyl-CoA ligase azaF (531 aa).

188 to 199 is a binding site for AMP; the sequence is RLFSSGTTGLPK. Residues 449-525 are AMP-binding; sequence EVEGVLRNHP…DAIPRNASGK (77 aa).

The protein belongs to the ATP-dependent AMP-binding enzyme family.

It functions in the pathway secondary metabolite biosynthesis. Its function is as follows. Acyl-CoA ligase; part of the gene cluster that mediates the biosynthesis of azaphilones, a class of fungal metabolites characterized by a highly oxygenated pyrano-quinone bicyclic core and exhibiting a broad range of bioactivities. In the first step, the non-reducing polyketide synthase azaA forms the hexaketide precursor from successive condensations of five malonyl-CoA units, presumably with a simple acetyl-CoA starter unit. The reactive polyketide chain then undergoes a PT-mediated C2-C7 cyclization to afford the aromatic ring and is eventually released as an aldehyde through the R-domain. The putative ketoreductase azaE is proposed to catalyze the reduction of the terminal ketone resulting in the early culture product FK17-P2a. The monooxygenase azaH was demonstrated to be the only enzyme required to convert FK17-P2a to azanigerone E. AzaH first hydroxylates the benzaldehyde intermediate FK17-P2a at C4, which triggers the formation of the pyran-ring to afford azanigerone E. In parallel, the 2,4-dimethylhexanoyl chain is synthesized by the HR-PKS azaB and is proposed to be transferred to the C4-hydroxyl of azanigerone E by the acyltransferase azaD directly from the ACP domain of azaB. Alternatively, the 2,4-dimethyl-hexanoyl chain may be offloaded from the HR-PKS as a carboxylic acid and converted to an acyl-CoA by azaF. The resulting acyl-CoA molecule could then be taken up as a substrate by AzaD to form azanigerone B. To yield the carboxylic acid substituent in azanigerone A, the hydroxypropyl side chain of azanigerone B would need to undergo a C-C oxidative cleavage catalyzed by cytochrome P450 AzaI. AzaI is proposed to act on a vicinal diol that leads to a C-C bond scission either through an alkoxyradical intermediate or a peroxy complex. In the biosynthesis of azanigerone A, azanigerone B first undergoes hydroxylation at C10, possibly catalyzed by one of the two FAD-dependent monooxygenases encoded in the cluster, azaG or azaL, resulting in the vicinal diol azanigerone C. Oxidative cleavage of azanigerone C by azaI would yield the corresponding aldehyde derivative of azanigerone A. Finally, the dehydrogenase azaJ is proposed to convert the aldehyde functional group into the carboxylic acid, completing the conversion from azanigerone B to azanigerone A. Alternatively, the oxidation of aldehyde to carboxylic acid may be catalyzed by the same P450 enzyme azaI via consecutive oxidation or by endogenous alcohol dehydrogenase. In Aspergillus niger (strain ATCC 1015 / CBS 113.46 / FGSC A1144 / LSHB Ac4 / NCTC 3858a / NRRL 328 / USDA 3528.7), this protein is Acyl-CoA ligase azaF.